Here is an 876-residue protein sequence, read N- to C-terminus: DNA topoisomerase 1 (876 aa).

One can recognise a Toprim domain in the interval 3 to 150; the sequence is KSLVIVESPA…RYKRVVFNEI (148 aa). Glutamate 9 contacts Mg(2+). Positions 37–69 are disordered; sequence LPTAGQTATPTGKAAAASTKKASTTDKEQQKRE. Residues 38–58 are compositionally biased toward low complexity; it reads PTAGQTATPTGKAAAASTKKA. Over residues 59–69 the composition is skewed to basic and acidic residues; sequence STTDKEQQKRE. Mg(2+) is bound at residue aspartate 119. In terms of domain architecture, Topo IA-type catalytic spans 166–582; sequence NMDGVNAQQA…EFFADFSRDL (417 aa). The segment at 200–205 is interaction with DNA; the sequence is SAGRVQ. Tyrosine 327 functions as the O-(5'-phospho-DNA)-tyrosine intermediate in the catalytic mechanism. 2 consecutive C4-type zinc fingers follow at residues 668 to 695 and 717 to 742; these read CPIC…NPNC and CDKC…NDAC.

Belongs to the type IA topoisomerase family. As to quaternary structure, monomer. Mg(2+) is required as a cofactor.

The enzyme catalyses ATP-independent breakage of single-stranded DNA, followed by passage and rejoining.. Its function is as follows. Releases the supercoiling and torsional tension of DNA, which is introduced during the DNA replication and transcription, by transiently cleaving and rejoining one strand of the DNA duplex. Introduces a single-strand break via transesterification at a target site in duplex DNA. The scissile phosphodiester is attacked by the catalytic tyrosine of the enzyme, resulting in the formation of a DNA-(5'-phosphotyrosyl)-enzyme intermediate and the expulsion of a 3'-OH DNA strand. The free DNA strand then undergoes passage around the unbroken strand, thus removing DNA supercoils. Finally, in the religation step, the DNA 3'-OH attacks the covalent intermediate to expel the active-site tyrosine and restore the DNA phosphodiester backbone. This Vibrio cholerae serotype O1 (strain ATCC 39315 / El Tor Inaba N16961) protein is DNA topoisomerase 1.